The primary structure comprises 780 residues: Putative ABC transporter ATP-binding protein BL0043 (780 aa).

2 ABC transporter domains span residues 2–238 (LKDI…QSET) and 282–531 (IRVS…GPAH). 34–41 (GPNGSGKS) is a binding site for ATP. A disordered region spans residues 230 to 272 (AEAVSQSETEGSIGTEAAPSRPTNDSPRQREREDGSELPLLSD). An ATP-binding site is contributed by 316–323 (GVNGSGKS). 4 helical membrane passes run 551-573 (FTMFAVNTPTQLALGIAITLAVI), 586-608 (SIHPILILLVLMGVVNLFVVRTG), 623-645 (GVTIAVLYACRFALVIILGAVFL), and 759-778 (IAARDLIFAAAVIIYIAAII).

It belongs to the ABC transporter superfamily.

It localises to the cell membrane. In terms of biological role, probably part of an ABC transporter complex. Responsible for energy coupling to the transport system. This Bifidobacterium longum (strain NCC 2705) protein is Putative ABC transporter ATP-binding protein BL0043.